The primary structure comprises 301 residues: Pseudouridine-5'-phosphate glycosidase (301 aa).

The Proton donor role is filled by Glu-23. The substrate site is built by Lys-84 and Val-104. A Mn(2+)-binding site is contributed by Asp-136. Substrate is bound at residue 138–140 (SRD). The active-site Nucleophile is the Lys-157.

This sequence belongs to the pseudouridine-5'-phosphate glycosidase family. In terms of assembly, homotrimer. Mn(2+) is required as a cofactor.

It catalyses the reaction D-ribose 5-phosphate + uracil = psi-UMP + H2O. Its function is as follows. Catalyzes the reversible cleavage of pseudouridine 5'-phosphate (PsiMP) to ribose 5-phosphate and uracil. Functions biologically in the cleavage direction, as part of a pseudouridine degradation pathway. The polypeptide is Pseudouridine-5'-phosphate glycosidase (Mycoplasmopsis agalactiae (strain NCTC 10123 / CIP 59.7 / PG2) (Mycoplasma agalactiae)).